A 365-amino-acid polypeptide reads, in one-letter code: Protein RecA (365 aa).

73 to 80 (GPESSGKT) is an ATP binding site.

Belongs to the RecA family.

It is found in the cytoplasm. Can catalyze the hydrolysis of ATP in the presence of single-stranded DNA, the ATP-dependent uptake of single-stranded DNA by duplex DNA, and the ATP-dependent hybridization of homologous single-stranded DNAs. It interacts with LexA causing its activation and leading to its autocatalytic cleavage. The sequence is that of Protein RecA from Prochlorococcus marinus (strain MIT 9215).